We begin with the raw amino-acid sequence, 447 residues long: Beta-glucuronosyltransferase GlcAT14A (447 aa).

Topologically, residues 1 to 33 (MKKLRSYYSNVRHHQNHHHHHHHHSNIVSSERK) are cytoplasmic. The chain crosses the membrane as a helical; Signal-anchor for type II membrane protein span at residues 34 to 54 (WIFFPLLIGSIFALFLLFLTT). Topologically, residues 55 to 447 (TLTSPTGGVR…TENFRSKQCK (393 aa)) are lumenal. N-linked (GlcNAc...) asparagine glycosylation is found at N151, N200, N329, and N405.

Belongs to the glycosyltransferase 14 family.

The protein localises to the golgi apparatus membrane. Its function is as follows. Beta-glucuronosyltransferase involved in the biosynthesis of type II arabinogalactan (AG). Modifies both the beta-1,6-linked galactan and beta-1,3-linked galactan present in type II AG. Transfers glucuronate to beta-1,6-galactooligosaccharides with degrees of polymerization ranging from 3 to 11. Transfers glucuronate to beta-1,3-galactooligosaccharides with degrees of polymerization ranging from 5 to 7. The addition of glucuronate at the O6 position may terminate galactose chain extension. Required for cell elongation during seedling growth. The protein is Beta-glucuronosyltransferase GlcAT14A of Arabidopsis thaliana (Mouse-ear cress).